The sequence spans 477 residues: Maternal protein exuperantia-2 (477 aa).

A compositionally biased stretch (basic and acidic residues) spans 196–209 (KDGNSTKEDEHENP). Disordered regions lie at residues 196–226 (KDGNSTKEDEHENPEGNSSITDNSGHKNQKQ) and 384–477 (TIKP…FADI). Basic residues predominate over residues 385–402 (IKPRCKRSGNGTRRRNRA).

Functionally, ensures the proper localization of the mRNA of the bicoid gene to the anterior regions of the oocyte thus playing a fundamental role in the establishment of the polarity of the oocyte. May bind the bcd mRNA. The protein is Maternal protein exuperantia-2 (exu2) of Drosophila pseudoobscura pseudoobscura (Fruit fly).